Reading from the N-terminus, the 1064-residue chain is Fibropellin-1 (1064 aa).

An N-terminal signal peptide occupies residues 1–19 (MRTWLLAVLLLSVIAVTYG). One can recognise an EGF-like 1 domain in the interval 20–55 (QGECDSDPCENGSTCQEGEGSYICQCPMGYDGQNCD). Cystine bridges form between Cys23–Cys34, Cys28–Cys43, Cys45–Cys54, and Cys62–Cys88. Residue Asn30 is glycosylated (N-linked (GlcNAc...) asparagine). The CUB domain maps to 62–175 (CGYNVFDANG…NRGFRITFSS (114 aa)). An N-linked (GlcNAc...) asparagine glycan is attached at Asn136. In terms of domain architecture, EGF-like 2; calcium-binding spans 176-212 (DGDDCDPNLCQNGAACTDLVNDYACTCPPGFTGRNCE). Intrachain disulfides connect Cys180–Cys191, Cys185–Cys200, Cys202–Cys211, Cys218–Cys229, Cys223–Cys238, Cys240–Cys249, Cys256–Cys267, Cys261–Cys276, Cys278–Cys287, Cys294–Cys305, Cys299–Cys314, Cys316–Cys325, Cys332–Cys343, Cys337–Cys352, Cys354–Cys363, Cys370–Cys381, Cys375–Cys390, Cys392–Cys401, Cys408–Cys419, Cys413–Cys428, Cys430–Cys439, Cys446–Cys457, Cys451–Cys466, Cys468–Cys477, Cys484–Cys495, Cys489–Cys504, Cys506–Cys515, Cys522–Cys533, Cys527–Cys542, Cys544–Cys553, Cys560–Cys571, Cys565–Cys580, Cys582–Cys591, Cys598–Cys609, Cys603–Cys618, Cys620–Cys629, Cys636–Cys647, Cys641–Cys656, Cys658–Cys667, Cys674–Cys685, Cys679–Cys694, Cys696–Cys705, Cys712–Cys723, Cys717–Cys732, Cys734–Cys743, Cys750–Cys761, Cys755–Cys770, Cys772–Cys781, Cys788–Cys799, Cys793–Cys808, Cys810–Cys819, Cys826–Cys837, Cys831–Cys846, Cys848–Cys857, Cys864–Cys875, Cys869–Cys884, Cys886–Cys895, Cys902–Cys913, Cys907–Cys922, Cys924–Cys933, and Cys939–Cys1015. One can recognise an EGF-like 3; calcium-binding domain in the interval 214 to 250 (DIDECASDPCQNGGACVDGVNGYVCNCVPGFDGDECE). The region spanning 252–288 (NINECASSPCLNGGICVDGVNMFECTCLAGFTGVRCE) is the EGF-like 4; calcium-binding domain. Residues 290–326 (NIDECASAPCQNGGICIDGINGYTCSCPLGFSGDNCE) form the EGF-like 5; calcium-binding domain. In terms of domain architecture, EGF-like 6; calcium-binding spans 328 to 364 (NDDECSSIPCLNGGTCVDLVNAYMCVCAPGWTGPTCA). Residues 366 to 402 (NIDECASAPCQNGGVCIDGVNGYMCDCQPGYTGTHCE) form the EGF-like 7; calcium-binding domain. The EGF-like 8; calcium-binding domain occupies 404-440 (DIDECARPPCQNGGDCVDGVNGYVCICAPGFDGLNCE). Positions 442–478 (NIDECASRPCQNGAVCVDGVNGFVCTCSAGYTGVLCE) constitute an EGF-like 9; calcium-binding domain. One can recognise an EGF-like 10; calcium-binding domain in the interval 480-516 (DINECASMPCLNGGVCTDLVNGYICTCAAGFEGTNCE). An EGF-like 11; calcium-binding domain is found at 518-554 (DTDECASFPCQNGATCTDQVNGYVCTCVPGYTGVLCE). One can recognise an EGF-like 12; calcium-binding domain in the interval 556–592 (DINECASFPCLNGGTCNDQVNGYVCVCAQDTSVSTCE). Residues 594–630 (DRDECASAPCLNGGACMDVVNGFVCTCLPGWEGTNCE) form the EGF-like 13; calcium-binding domain. Positions 632-668 (NTDECASSPCMNGGLCVDQVNSYVCFCLPGFTGIHCG) constitute an EGF-like 14; calcium-binding domain. One can recognise an EGF-like 15; calcium-binding domain in the interval 670-706 (EIDECASSPCLNGGQCIDRVDSYECVCAAGYTAVRCQ). The 37-residue stretch at 708–744 (NIDECASAPCQNGGVCVDGVNGYVCNCAPGYTGDNCE) folds into the EGF-like 16; calcium-binding domain. Residues 746 to 782 (EIDECASMPCLNGGACIEMVNGYTCQCVAGYTGVICE) enclose the EGF-like 17; calcium-binding domain. The 37-residue stretch at 784–820 (DIDECASAPCQNGGVCTDTINGYICACVPGFTGSNCE) folds into the EGF-like 18; calcium-binding domain. The region spanning 822 to 858 (NIDECASDPCLNGGICVDGVNGFVCQCPPNYSGTYCE) is the EGF-like 19; calcium-binding domain. Asn851 carries N-linked (GlcNAc...) asparagine glycosylation. An EGF-like 20 domain is found at 860-896 (SLDACRSMPCQNGATCVNVGADYVCECVPGYAGQNCE). Residues 898-934 (DINECASLPCQNGGLCIDGIAGYTCQCRLGYIGVNCE) enclose the EGF-like 21; calcium-binding domain. The region spanning 937–1056 (GFCDLEGMWY…GQDKWTRYEQ (120 aa)) is the Avidin-like domain.

Homotetramer.

The protein localises to the secreted. It localises to the extracellular space. The protein resides in the cytoplasmic vesicle. Its subcellular location is the extracellular matrix. It is found in the hyaline layer. The protein localises to the apical lamina. In terms of biological role, forms the apical lamina, a component of the extracellular matrix. In Strongylocentrotus purpuratus (Purple sea urchin), this protein is Fibropellin-1 (EGF1).